Consider the following 436-residue polypeptide: Methylenetetrahydrofolate--tRNA-(uracil-5-)-methyltransferase TrmFO (436 aa).

11–16 (GAGLAG) lines the FAD pocket.

It belongs to the MnmG family. TrmFO subfamily. FAD serves as cofactor.

It is found in the cytoplasm. The enzyme catalyses uridine(54) in tRNA + (6R)-5,10-methylene-5,6,7,8-tetrahydrofolate + NADH + H(+) = 5-methyluridine(54) in tRNA + (6S)-5,6,7,8-tetrahydrofolate + NAD(+). It carries out the reaction uridine(54) in tRNA + (6R)-5,10-methylene-5,6,7,8-tetrahydrofolate + NADPH + H(+) = 5-methyluridine(54) in tRNA + (6S)-5,6,7,8-tetrahydrofolate + NADP(+). Its function is as follows. Catalyzes the folate-dependent formation of 5-methyl-uridine at position 54 (M-5-U54) in all tRNAs. This Shouchella clausii (strain KSM-K16) (Alkalihalobacillus clausii) protein is Methylenetetrahydrofolate--tRNA-(uracil-5-)-methyltransferase TrmFO.